The chain runs to 211 residues: Histidine biosynthesis bifunctional protein HisIE (211 aa).

Residues 1 to 107 (MNKLIDFSKG…FNSEIESRFK (107 aa)) are phosphoribosyl-AMP cyclohydrolase. A phosphoribosyl-ATP pyrophosphohydrolase region spans residues 108–211 (IQALAQTIHQ…KGERKEVREW (104 aa)).

This sequence in the N-terminal section; belongs to the PRA-CH family. It in the C-terminal section; belongs to the PRA-PH family.

The protein localises to the cytoplasm. The enzyme catalyses 1-(5-phospho-beta-D-ribosyl)-ATP + H2O = 1-(5-phospho-beta-D-ribosyl)-5'-AMP + diphosphate + H(+). The catalysed reaction is 1-(5-phospho-beta-D-ribosyl)-5'-AMP + H2O = 1-(5-phospho-beta-D-ribosyl)-5-[(5-phospho-beta-D-ribosylamino)methylideneamino]imidazole-4-carboxamide. It functions in the pathway amino-acid biosynthesis; L-histidine biosynthesis; L-histidine from 5-phospho-alpha-D-ribose 1-diphosphate: step 2/9. It participates in amino-acid biosynthesis; L-histidine biosynthesis; L-histidine from 5-phospho-alpha-D-ribose 1-diphosphate: step 3/9. This chain is Histidine biosynthesis bifunctional protein HisIE, found in Staphylococcus epidermidis (strain ATCC 35984 / DSM 28319 / BCRC 17069 / CCUG 31568 / BM 3577 / RP62A).